The following is a 199-amino-acid chain: Thymidylate kinase (199 aa).

ATP is bound at residue 7-14; the sequence is GIDGSGKS.

Belongs to the thymidylate kinase family.

It catalyses the reaction dTMP + ATP = dTDP + ADP. In terms of biological role, phosphorylation of dTMP to form dTDP in both de novo and salvage pathways of dTTP synthesis. The sequence is that of Thymidylate kinase from Thermosipho melanesiensis (strain DSM 12029 / CIP 104789 / BI429).